A 417-amino-acid polypeptide reads, in one-letter code: 3-ketoacyl-CoA thiolase, peroxisomal (417 aa).

The N-terminal 15 residues, 1–15, are a transit peptide targeting the peroxisome; it reads MSQRLQSIKDHLVES. A PTS2-type peroxisomal targeting signal region spans residues 1-15; sequence MSQRLQSIKDHLVES. The active-site Acyl-thioester intermediate is the cysteine 125. Catalysis depends on proton acceptor residues histidine 375 and cysteine 403.

It belongs to the thiolase-like superfamily. Thiolase family. Homodimer. Interacts (via PTS2-type peroxisomal targeting signal region) with PEX7; leading to its translocation into peroxisomes.

It localises to the peroxisome. The protein resides in the mitochondrion intermembrane space. The catalysed reaction is an acyl-CoA + acetyl-CoA = a 3-oxoacyl-CoA + CoA. It functions in the pathway lipid metabolism; fatty acid metabolism. In terms of biological role, responsible for the thiolytic cleavage of straight chain 3-keto fatty acyl-CoAs (3-oxoacyl-CoAs). This is 3-ketoacyl-CoA thiolase, peroxisomal (POT1) from Saccharomyces cerevisiae (strain ATCC 204508 / S288c) (Baker's yeast).